Here is a 390-residue protein sequence, read N- to C-terminus: Homoserine O-succinyltransferase (390 aa).

The AB hydrolase-1 domain occupies 59–369 (NAVLVCHALN…PHGHDAFLLD (311 aa)). Catalysis depends on Ser-165, which acts as the Nucleophile. Arg-235 lines the substrate pocket. Catalysis depends on residues Asp-330 and His-363. Residue Asp-364 participates in substrate binding.

Belongs to the AB hydrolase superfamily. MetX family. Homodimer.

The protein localises to the cytoplasm. It carries out the reaction L-homoserine + succinyl-CoA = O-succinyl-L-homoserine + CoA. Its pathway is amino-acid biosynthesis; L-methionine biosynthesis via de novo pathway; O-succinyl-L-homoserine from L-homoserine: step 1/1. In terms of biological role, transfers a succinyl group from succinyl-CoA to L-homoserine, forming succinyl-L-homoserine. The polypeptide is Homoserine O-succinyltransferase (Cupriavidus metallidurans (strain ATCC 43123 / DSM 2839 / NBRC 102507 / CH34) (Ralstonia metallidurans)).